Reading from the N-terminus, the 165-residue chain is Transcription elongation factor A protein-like 1 (165 aa).

2 disordered regions span residues 1–66 and 89–124; these read MENS…LLPE and IPME…GDIH. Residues 33–60 are compositionally biased toward acidic residues; the sequence is CSEDDQSSEDLSSEEQSSDEEFFPEELL. The segment covering 101–124 has biased composition (basic and acidic residues); it reads HKLEEGSFKERLARSRPQFRGDIH.

This sequence belongs to the TFS-II family. TFA subfamily.

The protein localises to the nucleus. May be involved in transcriptional regulation. Modulates various viral and cellular promoters in a promoter context-dependent manner. Does not bind DNA directly. In Rattus norvegicus (Rat), this protein is Transcription elongation factor A protein-like 1.